We begin with the raw amino-acid sequence, 278 residues long: Diaminopimelate epimerase (278 aa).

Residues Asn13, Gln46, and Asn65 each coordinate substrate. Residue Cys74 is the Proton donor of the active site. Substrate-binding positions include 75 to 76 (GN), Asn157, Asn190, and 208 to 209 (ER). Residue Cys217 is the Proton acceptor of the active site. 218-219 (GT) is a substrate binding site.

Belongs to the diaminopimelate epimerase family. Homodimer.

The protein localises to the cytoplasm. The enzyme catalyses (2S,6S)-2,6-diaminopimelate = meso-2,6-diaminopimelate. It participates in amino-acid biosynthesis; L-lysine biosynthesis via DAP pathway; DL-2,6-diaminopimelate from LL-2,6-diaminopimelate: step 1/1. Functionally, catalyzes the stereoinversion of LL-2,6-diaminopimelate (L,L-DAP) to meso-diaminopimelate (meso-DAP), a precursor of L-lysine and an essential component of the bacterial peptidoglycan. The protein is Diaminopimelate epimerase of Magnetococcus marinus (strain ATCC BAA-1437 / JCM 17883 / MC-1).